The following is a 378-amino-acid chain: Probable pectin lyase A (378 aa).

An N-terminal signal peptide occupies residues 1-18; that stretch reads MKYQGLLAIAGCIASASA. 2 disulfide bridges follow: cysteine 81–cysteine 100 and cysteine 90–cysteine 224. N-linked (GlcNAc...) asparagine glycosylation occurs at asparagine 127. The active site involves arginine 254. Cysteine 321 and cysteine 329 are oxidised to a cystine.

Belongs to the polysaccharide lyase 1 family.

The protein localises to the secreted. The enzyme catalyses Eliminative cleavage of (1-&gt;4)-alpha-D-galacturonan methyl ester to give oligosaccharides with 4-deoxy-6-O-methyl-alpha-D-galact-4-enuronosyl groups at their non-reducing ends.. Functionally, pectinolytic enzymes consist of four classes of enzymes: pectin lyase, polygalacturonase, pectin methylesterase and rhamnogalacturonase. Among pectinolytic enzymes, pectin lyase is the most important in depolymerization of pectin, since it cleaves internal glycosidic bonds of highly methylated pectins. In Neosartorya fischeri (strain ATCC 1020 / DSM 3700 / CBS 544.65 / FGSC A1164 / JCM 1740 / NRRL 181 / WB 181) (Aspergillus fischerianus), this protein is Probable pectin lyase A (pelA).